We begin with the raw amino-acid sequence, 382 residues long: Proton extrusion protein PxcA (382 aa).

A run of 4 helical transmembrane segments spans residues 156 to 176 (TLIS…VQQV), 257 to 277 (AVKN…VCLF), 305 to 325 (IILF…TVLL), and 340 to 360 (FILL…KYWI).

It belongs to the CemA family.

The protein resides in the cell inner membrane. Functionally, required for H(+) efflux immediately after light irradiation to form a rapid H(+) concentration gradient across the thylakoid membranes. Together with PxcL, contributes to transient H(+) uptake following dark to light transition. The sequence is that of Proton extrusion protein PxcA from Synechococcus sp. (strain CC9311).